The sequence spans 116 residues: NADH-quinone oxidoreductase subunit A (116 aa).

The next 3 membrane-spanning stretches (helical) occupy residues phenylalanine 3 to leucine 23, phenylalanine 61 to valine 81, and glutamine 88 to tryptophan 108.

Belongs to the complex I subunit 3 family. NDH-1 is composed of 14 different subunits. Subunits NuoA, H, J, K, L, M, N constitute the membrane sector of the complex.

Its subcellular location is the cell inner membrane. It catalyses the reaction a quinone + NADH + 5 H(+)(in) = a quinol + NAD(+) + 4 H(+)(out). Its function is as follows. NDH-1 shuttles electrons from NADH, via FMN and iron-sulfur (Fe-S) centers, to quinones in the respiratory chain. The immediate electron acceptor for the enzyme in this species is believed to be a menaquinone. Couples the redox reaction to proton translocation (for every two electrons transferred, four hydrogen ions are translocated across the cytoplasmic membrane), and thus conserves the redox energy in a proton gradient. This chain is NADH-quinone oxidoreductase subunit A, found in Bacteroides thetaiotaomicron (strain ATCC 29148 / DSM 2079 / JCM 5827 / CCUG 10774 / NCTC 10582 / VPI-5482 / E50).